We begin with the raw amino-acid sequence, 316 residues long: Sigma factor AlgU regulatory protein MucB (316 aa).

Residues methionine 1 to alanine 21 form the signal peptide.

It belongs to the RseB family.

Its subcellular location is the periplasm. In terms of biological role, negative regulator of the sigma factor AlgU. Plays a role in the differentiation of P.aeruginosa into the alginate-producing form. Inactivation of mucB causes conversion to mucoidy. The sequence is that of Sigma factor AlgU regulatory protein MucB (mucB) from Pseudomonas aeruginosa (strain ATCC 15692 / DSM 22644 / CIP 104116 / JCM 14847 / LMG 12228 / 1C / PRS 101 / PAO1).